The chain runs to 293 residues: Ribosomal protein L11 methyltransferase (293 aa).

S-adenosyl-L-methionine contacts are provided by T145, G166, D188, and N230.

It belongs to the methyltransferase superfamily. PrmA family.

It localises to the cytoplasm. The enzyme catalyses L-lysyl-[protein] + 3 S-adenosyl-L-methionine = N(6),N(6),N(6)-trimethyl-L-lysyl-[protein] + 3 S-adenosyl-L-homocysteine + 3 H(+). Its function is as follows. Methylates ribosomal protein L11. In Yersinia pseudotuberculosis serotype I (strain IP32953), this protein is Ribosomal protein L11 methyltransferase.